The sequence spans 59 residues: Membrane-associated ATPase epsilon chain (59 aa).

The protein to E.hirae NtpH. As to quaternary structure, sul-ATPase is composed of six (or maybe five) subunits: alpha, beta, delta, gamma, C (proteolipid), and possibly epsilon.

The enzyme catalyses ATP + H2O + 4 H(+)(in) = ADP + phosphate + 5 H(+)(out). This chain is Membrane-associated ATPase epsilon chain (atpE), found in Sulfurisphaera tokodaii (strain DSM 16993 / JCM 10545 / NBRC 100140 / 7) (Sulfolobus tokodaii).